A 199-amino-acid polypeptide reads, in one-letter code: Phosphoserine phosphatase RsbX (199 aa).

The PPM-type phosphatase domain occupies 11 to 198 (QTLVYQLNKE…DDLTYILGQL (188 aa)).

The catalysed reaction is O-phospho-L-serine + H2O = L-serine + phosphate. It catalyses the reaction O-phospho-D-serine + H2O = D-serine + phosphate. Negative regulator of sigma-B activity. Dephosphorylates RsbS. Plays a role both in maintaining low sigma-B activity during growth and in reestablishing prestress sigma-B activity after induction. Could have a negative feedback role by indirectly communicating sigma-B protein levels. In Bacillus subtilis (strain 168), this protein is Phosphoserine phosphatase RsbX (rsbX).